Consider the following 274-residue polypeptide: Large ribosomal subunit protein uL2 (274 aa).

Residues valine 223 to lysine 274 form a disordered region.

It belongs to the universal ribosomal protein uL2 family. In terms of assembly, part of the 50S ribosomal subunit. Forms a bridge to the 30S subunit in the 70S ribosome.

One of the primary rRNA binding proteins. Required for association of the 30S and 50S subunits to form the 70S ribosome, for tRNA binding and peptide bond formation. It has been suggested to have peptidyltransferase activity; this is somewhat controversial. Makes several contacts with the 16S rRNA in the 70S ribosome. This chain is Large ribosomal subunit protein uL2, found in Shewanella baltica (strain OS223).